The following is a 333-amino-acid chain: Complement C1q and tumor necrosis factor-related protein 9A (333 aa).

Residues 1–19 form the signal peptide; the sequence is MRIWWLLLAIEICTGNINS. Collagen-like domains lie at 24-82, 95-154, and 155-191; these read RQGH…DGKV, GSPG…PGPM, and GPIG…GEKG. The interval 24-188 is disordered; sequence RQGHPGIPGN…GIRGWKGDRG (165 aa). Positions 26–40 are enriched in low complexity; the sequence is GHPGIPGNPGHNGLP. Residues P31, P34, and P40 each carry the 4-hydroxyproline modification. The span at 42–57 shows a compositional bias: basic and acidic residues; that stretch reads RDGRDGAKGDKGDAGE. A 4-hydroxyproline mark is found at P58, P61, and P64. Basic and acidic residues predominate over residues 69–88; that stretch reads TSGEKGERGADGKVEAKGIK. 5-hydroxylysine is present on residues K73 and K127. O-linked (Gal...) hydroxylysine glycosylation is found at K73 and K127. 4-hydroxyproline occurs at positions 151, 160, and 175. In terms of domain architecture, C1q spans 197–333; that stretch reads LVLPKSAFTV…FTGFLLFSSP (137 aa).

Multimers (predominantly trimers). Interacts with ADIPOQ via the C1q domain to form a heterotrimeric complex. Interacts with CTRP9B. Forms heterotrimers and heterooligomeric complexes with CTRP9B. Expressed predominantly in adipose tissue.

It localises to the secreted. In terms of biological role, probable adipokine. Activates AMPK, AKT, and p44/42 MAPK signaling pathways. The polypeptide is Complement C1q and tumor necrosis factor-related protein 9A (C1QTNF9) (Homo sapiens (Human)).